Here is a 222-residue protein sequence, read N- to C-terminus: Transmembrane reductase CYB561D2 (222 aa).

Residues 2 to 17 lie on the Cytoplasmic side of the membrane; the sequence is ALSAETESHIYRALRT. Residues 14 to 217 enclose the Cytochrome b561 domain; that stretch reads ALRTASGAAA…NQVSNAYLYR (204 aa). Residues 18-38 form a helical membrane-spanning segment; sequence ASGAAAHLVALGFTIFVAVLA. At 39–46 the chain is on the lumenal side; the sequence is RPGSSLFS. The chain crosses the membrane as a helical span at residues 47–67; it reads WHPVLMSLAFSFLMTEALLVF. Heme b is bound at residue H48. Residues 68–85 are Cytoplasmic-facing; that stretch reads SPESSLLHSLSRKGRARC. 2 residues coordinate heme b: H86 and H120. The helical transmembrane segment at 86 to 106 threads the bilayer; the sequence is HWVLQLLALLCALLGLGLVIL. Over 107–122 the chain is Lumenal; sequence HKEQLGKAHLVTRHGQ. A helical membrane pass occupies residues 123–143; that stretch reads AGLLAVLWAGLQCSGGVGLLY. The Cytoplasmic portion of the chain corresponds to 144–162; that stretch reads PKLLPRWPLAKLKLYHATS. Position 159 (H159) interacts with heme b. Residues 163–183 form a helical membrane-spanning segment; it reads GLVGYLLGSASLLLGMCSLWF. At 184–186 the chain is on the lumenal side; it reads TAS. A helical transmembrane segment spans residues 187 to 207; sequence VTGAAWYLAVLCPVLTSLVIM. Over 208–222 the chain is Cytoplasmic; that stretch reads NQVSNAYLYRKRIQP.

Heme b is required as a cofactor.

Its subcellular location is the endoplasmic reticulum membrane. It is found in the cytoplasmic vesicle membrane. The enzyme catalyses monodehydro-L-ascorbate radical(out) + L-ascorbate(in) = monodehydro-L-ascorbate radical(in) + L-ascorbate(out). The catalysed reaction is Fe(3+)(out) + L-ascorbate(in) = monodehydro-L-ascorbate radical(in) + Fe(2+)(out) + H(+). Transmembrane reductase that may use ascorbate as an electron donor in the cytoplasm and transfer electrons across endoplasmic reticulum membranes to reduce monodehydro-L-ascorbate radical and iron cations Fe(3+) in the lumen of that compartment. The sequence is that of Transmembrane reductase CYB561D2 from Homo sapiens (Human).